The chain runs to 375 residues: Carbamoyl phosphate synthase small chain (375 aa).

The interval 1–180 (MSKALLVLED…DAYVVEPKGK (180 aa)) is CPSase. The L-glutamine site is built by Ser46, Gly232, and Gly234. A Glutamine amidotransferase type-1 domain is found at 184 to 375 (TVAALDLGIK…SFVELMAAQR (192 aa)). Cys260 functions as the Nucleophile in the catalytic mechanism. L-glutamine-binding residues include Phe261, Gln264, Asn302, Gly304, and Phe305. Active-site residues include His350 and Glu352.

It belongs to the CarA family. As to quaternary structure, composed of two chains; the small (or glutamine) chain promotes the hydrolysis of glutamine to ammonia, which is used by the large (or ammonia) chain to synthesize carbamoyl phosphate. Tetramer of heterodimers (alpha,beta)4.

It catalyses the reaction hydrogencarbonate + L-glutamine + 2 ATP + H2O = carbamoyl phosphate + L-glutamate + 2 ADP + phosphate + 2 H(+). The catalysed reaction is L-glutamine + H2O = L-glutamate + NH4(+). It functions in the pathway amino-acid biosynthesis; L-arginine biosynthesis; carbamoyl phosphate from bicarbonate: step 1/1. It participates in pyrimidine metabolism; UMP biosynthesis via de novo pathway; (S)-dihydroorotate from bicarbonate: step 1/3. Functionally, small subunit of the glutamine-dependent carbamoyl phosphate synthetase (CPSase). CPSase catalyzes the formation of carbamoyl phosphate from the ammonia moiety of glutamine, carbonate, and phosphate donated by ATP, constituting the first step of 2 biosynthetic pathways, one leading to arginine and/or urea and the other to pyrimidine nucleotides. The small subunit (glutamine amidotransferase) binds and cleaves glutamine to supply the large subunit with the substrate ammonia. The protein is Carbamoyl phosphate synthase small chain of Mycobacterium leprae (strain TN).